We begin with the raw amino-acid sequence, 115 residues long: U3-lycotoxin-Ls1a (115 aa).

The first 20 residues, 1 to 20 (MKFVLLFGVLLVTLFSYSSA), serve as a signal peptide directing secretion. Positions 21 to 44 (EMLDDFDQADEDELLSSIEKEEAR) are excised as a propeptide. Cystine bridges form between C48/C63, C55/C72, C62/C87, and C74/C85.

The protein belongs to the neurotoxin 19 (CSTX) family. 01 subfamily. As to expression, expressed by the venom gland.

It localises to the secreted. The chain is U3-lycotoxin-Ls1a from Lycosa singoriensis (Wolf spider).